Reading from the N-terminus, the 126-residue chain is Putative lipoprotein LprD (126 aa).

Positions Met1–Gly21 are cleaved as a signal peptide. Cys22 carries N-palmitoyl cysteine lipidation. A lipid anchor (S-diacylglycerol cysteine) is attached at Cys22. A helical membrane pass occupies residues Phe40 to Tyr60. The disordered stretch occupies residues Pro70–Pro101.

It to M.leprae ML1177.

It is found in the cell membrane. The protein is Putative lipoprotein LprD (lprD) of Mycobacterium tuberculosis (strain CDC 1551 / Oshkosh).